Reading from the N-terminus, the 727-residue chain is MNANEEGEGSRYPITDRKTGETKFDRVESRTEKHSEEEKTNGITMDVRNGSSGGLQIPLSQQTAATVCWERFLHVRTIRVLLVENDDCTRYIVTALLRNCSYEVVEASNGIQAWKVLEDLNNHIDIVLTEVIMPYLSGIGLLCKILNHKSRRNIPVIMMSSHDSMGLVFKCLSKGAVDFLVKPIRKNELKILWQHVWRRCQSSSGSGSESGTHQTQKSVKSKSIKKSDQDSGSSDENENGSIGLNASDGSSDGSGAQSSWTKKAVDVDDSPRAVSLWDRVDSTCAQVVHSNPEFPSNQLVAPPAEKETQEHDDKFEDVTMGRDLEISIRRNCDLALEPKDEPLSKTTGIMRQDNSFEKSSSKWKMKVGKGPLDLSSESPSSKQMHEDGGSSFKAMSSHLQDNREPEAPNTHLKTLDTNEASVKISEELMHVEHSSKRHRGTKDDGTLVRDDRNVLRRSEGSAFSRYNPASNANKISGGNLGSTSLQDNNSQDLIKKTEAAYDCHSNMNESLPHNHRSHVGSNNFDMSSTTENNAFTKPGAPKVSSAGSSSVKHSSFQPLPCDHHNNHASYNLVHVAERKKLPPQCGSSNVYNETIEGNNNTVNYSVNGSVSGSGHGSNGPYGSSNGMNAGGMNMGSDNGAGKNGNGDGSGSGSGSGSGNLADENKISQREAALTKFRQKRKERCFRKKVRYQSRKKLAEQRPRVRGQFVRKTAAATDDNDIKNIEDS.

A disordered region spans residues 1-47 (MNANEEGEGSRYPITDRKTGETKFDRVESRTEKHSEEEKTNGITMDV). Positions 14–40 (ITDRKTGETKFDRVESRTEKHSEEEKT) are enriched in basic and acidic residues. The Response regulatory domain maps to 79 to 197 (RVLLVENDDC…ELKILWQHVW (119 aa)). Disordered stretches follow at residues 203-265 (SSGS…KKAV), 291-312 (NPEF…QEHD), 339-416 (KDEP…KTLD), 464-487 (SRYN…SLQD), 509-560 (ESLP…QPLP), and 606-670 (VNGS…SQRE). A compositionally biased stretch (low complexity) spans 246–259 (ASDGSSDGSGAQSS). Polar residues-rich tracts occupy residues 344-353 (SKTTGIMRQD), 467-487 (NPAS…SLQD), and 519-535 (VGSN…NNAF). Residues 538–555 (PGAPKVSSAGSSSVKHSS) are compositionally biased toward low complexity. Positions 641 to 657 (GKNGNGDGSGSGSGSGS) are enriched in gly residues. The region spanning 669–711 (REAALTKFRQKRKERCFRKKVRYQSRKKLAEQRPRVRGQFVRK) is the CCT domain.

It belongs to the ARR-like family. Post-translationally, phosphorylated. Phosphorylation varies throughout the diurnal cycle.

It is found in the nucleus. Functionally, transcriptional repressor of CCA1 and LHY, and positive regulator of LWD1 and LWD2 expression. Represses the expression of other clock proteins and master regulators of plant growth, development and response to abiotic stress. Involved in the positive and negative feedback loops of the circadian clock. Controls photoperiodic flowering response and temperature compensation. Expression of several members of the ARR-like family is controlled by circadian rhythm. APRR9, APRR7, and APRR5 coordinately act on the upstream region of the target genes to repress their expression from noon until midnight. The particular coordinated sequential expression of APRR9, APRR7, APRR5, APRR3 and APPR1 result to circadian waves that may be at the basis of the endogenous circadian clock. This Arabidopsis thaliana (Mouse-ear cress) protein is Two-component response regulator-like APRR7 (APRR7).